We begin with the raw amino-acid sequence, 394 residues long: MSKEKFERTKPHVNVGTIGHVDHGKTTLTAAITTVLAKTYGGSARAFDQIDNAPEEKARGITINTSHVEYDTPARHYAHVDCPGHADYVKNMITGAAQMDGAILVVAATDGPMPQTREHILLGRQVGVPYIIVFLNKCDMVDDEELLELVEMEVRELLSQYDFPGDDTPVIRGSALKALEGDAEWEAKIIELAEALDSYIPQPERAIDRPFLLPIEDVFSISGRGTVVTGRVERGIVKVGEEVEIVGIIDTIKTTCTGVEMFRKLLDEGRAGENVGVLLRGTKRDDVQRGQVLAKPGSIKPHTKFESEVYILSKDEGGRHTPFFKGYRPQFYFRTIDVTGTIELPEGVEMVMPGDNVNMVVNLIAPIAMDDGLRFAIREGGRTVGAGVVAKVIE.

The tr-type G domain maps to 10–204; sequence KPHVNVGTIG…ALDSYIPQPE (195 aa). Residues 19-26 form a G1 region; it reads GHVDHGKT. 19–26 provides a ligand contact to GTP; it reads GHVDHGKT. Threonine 26 contributes to the Mg(2+) binding site. A G2 region spans residues 60 to 64; that stretch reads GITIN. The G3 stretch occupies residues 81–84; sequence DCPG. Residues 81 to 85 and 136 to 139 each bind GTP; these read DCPGH and NKCD. Positions 136-139 are G4; the sequence is NKCD. The tract at residues 174 to 176 is G5; it reads SAL.

This sequence belongs to the TRAFAC class translation factor GTPase superfamily. Classic translation factor GTPase family. EF-Tu/EF-1A subfamily. As to quaternary structure, monomer.

It localises to the cytoplasm. It catalyses the reaction GTP + H2O = GDP + phosphate + H(+). Its function is as follows. GTP hydrolase that promotes the GTP-dependent binding of aminoacyl-tRNA to the A-site of ribosomes during protein biosynthesis. This Yersinia pestis bv. Antiqua (strain Nepal516) protein is Elongation factor Tu 1.